Here is a 335-residue protein sequence, read N- to C-terminus: Large ribosomal subunit protein uL10 (335 aa).

Positions 304–335 (GAAAPVEEAPVEEKKEEKKEEAAPAAGLGMLF) are disordered. Over residues 314–325 (VEEKKEEKKEEA) the composition is skewed to basic and acidic residues.

Belongs to the universal ribosomal protein uL10 family. Part of the 50S ribosomal subunit. Forms part of the ribosomal stalk which helps the ribosome interact with GTP-bound translation factors. Forms a heptameric L10(L12)2(L12)2(L12)2 complex, where L10 forms an elongated spine to which the L12 dimers bind in a sequential fashion.

Its function is as follows. Forms part of the ribosomal stalk, playing a central role in the interaction of the ribosome with GTP-bound translation factors. In Methanococcus maripaludis (strain C6 / ATCC BAA-1332), this protein is Large ribosomal subunit protein uL10.